A 699-amino-acid chain; its full sequence is MSLSRILRYNQRNNKTTASLTAEHAYSDNWAYSVSLGDPTSVGVNMAAKTGEALNKSYDSVFSSLPVADSVPRTDFTASSRDDENTDVQKLTTSWMEKIDTKMPENISKIDSNIISSPMVSKVEARFIVPKGRLRKNSTDFTSSFSNSLSLPKSYGKLIFFTSKKNSSSTKKNLANDISDNKHNNNSSNTIGHNIPVTTATATCDEIACTSTEHEYNVYEEERMFTTRVYSLEDSVSSLSTNPLDDTYSEAVQVNTRHIEDTESTAHIRKHSYTTSLSSIKRLFKITSFSNNNSNSCDHQESTVADDCAISSSLKETTSSPVSTGSFSLMIENEDSDRDQIIQALYSNIEASTDLVSRKYRDLDVVLGEGSGGKVKLVQRVLDNKVFALKEYRSKKKRESERKYIKNIISEYCIASTLKNPNICETLEILYEKGKIFQILEYCEYDLFSLVMSEKMHYEEICCLFKQLINGVKYLHDIGLSHRDLKLDNCVVTRRGILKLIDFGASSVFHYPLSSQMIEANGIVGSDPYLSPEVFYFNEYDPRALDVWSVGIIFFCMITRRFPWKYPKVKDVQFKAFCSGRGVSSFKDLVTRPATDDSNNYDNDGYEEGVIDMGPNFILHRLPEETHKIMRRILEVSPFRRITINGILQDGWIKEIETCQVVGAASPNEASLRIINKGNHIHTNIDQRYAHIGGLHQRT.

The interval 168 to 193 (SSTKKNLANDISDNKHNNNSSNTIGH) is disordered. A compositionally biased stretch (polar residues) spans 184-193 (NNNSSNTIGH). A Protein kinase domain is found at 361–653 (RDLDVVLGEG…INGILQDGWI (293 aa)). ATP contacts are provided by residues 367 to 375 (LGEGSGGKV) and Lys-390. The active-site Proton acceptor is the Asp-484.

Belongs to the protein kinase superfamily. Ser/Thr protein kinase family.

The catalysed reaction is L-seryl-[protein] + ATP = O-phospho-L-seryl-[protein] + ADP + H(+). The enzyme catalyses L-threonyl-[protein] + ATP = O-phospho-L-threonyl-[protein] + ADP + H(+). Its function is as follows. Protein kinase that functions as a regulator in the pheromone-induced mating pathway downstream of mitogen-activated protein kinase (MAPK) FUS3. Diminishes transcriptional induction of genes in response to pheromone signaling. The sequence is that of Serine/threonine-protein kinase PRR2 (PRR2) from Saccharomyces cerevisiae (strain ATCC 204508 / S288c) (Baker's yeast).